Reading from the N-terminus, the 307-residue chain is Glycine--tRNA ligase alpha subunit (307 aa).

Belongs to the class-II aminoacyl-tRNA synthetase family. Tetramer of two alpha and two beta subunits.

It localises to the cytoplasm. It catalyses the reaction tRNA(Gly) + glycine + ATP = glycyl-tRNA(Gly) + AMP + diphosphate. This is Glycine--tRNA ligase alpha subunit from Aeromonas salmonicida (strain A449).